A 5147-amino-acid chain; its full sequence is Cadherin-related tumor suppressor (5147 aa).

An N-terminal signal peptide occupies residues 1-35; sequence MERLLLLFFLLLAGRESLCQTGDTKLELLAPRGRS. Cadherin domains follow at residues 36 to 156, 157 to 270, 271 to 382, 383 to 494, 495 to 599, 600 to 708, 709 to 820, 821 to 942, 943 to 1049, 1050 to 1153, 1154 to 1278, 1279 to 1384, 1385 to 1489, 1490 to 1601, 1602 to 1713, 1714 to 1823, 1824 to 1922, 1923 to 2027, 2028 to 2167, 2168 to 2278, 2279 to 2385, 2386 to 2491, 2492 to 2596, 2597 to 2703, 2704 to 2810, 2811 to 2913, 2914 to 3013, 3014 to 3124, 3125 to 3229, 3230 to 3334, 3335 to 3439, 3440 to 3545, 3546 to 3651, and 3652 to 3756; these read YATT…SPEF, PEPS…PPIF, DHSD…DPII, SFRF…EPVF, EKSE…APQF, SQRE…DPQF, YPRH…LEML, ECGQ…APVF, ALDR…TPVF, DHTS…APQF, TNST…APEF, LRAP…APEF, TQSS…PPIF, PSTA…APVF, VSMN…VPQF, EQRS…PPQF, LDTP…PPLF, EDTV…APIF, DPMS…VPVF, ISAN…SPVF, DPKQ…PTFL, DSPY…DPVF, ELQS…IPKF, DSTT…FPTF, AYMA…APVM, EQLI…PPKF, TRLF…APEF, EHSF…PPKF, EQAE…TPRF, SVNS…PPVF, NHKE…YPQF, LQPV…PPEF, IKHY…GPTF, and TPEG…NPST. At 36-4583 the chain is on the extracellular side; the sequence is YATTYEQYAA…GQDAAQVADP (4548 aa). Asn239, Asn257, Asn276, Asn280, Asn402, and Asn461 each carry an N-linked (GlcNAc...) asparagine glycan. N-linked (GlcNAc...) asparagine glycosylation is found at Asn605 and Asn631. N-linked (GlcNAc...) asparagine glycosylation is found at Asn1155, Asn1367, and Asn1458. N-linked (GlcNAc...) asparagine glycosylation is found at Asn1751, Asn1831, and Asn1880. Asn2080, Asn2171, Asn2247, Asn2290, Asn2437, and Asn2581 each carry an N-linked (GlcNAc...) asparagine glycan. Asn2799 carries an N-linked (GlcNAc...) asparagine glycan. N-linked (GlcNAc...) asparagine glycans are attached at residues Asn2920, Asn2946, and Asn2967. N-linked (GlcNAc...) asparagine glycosylation is found at Asn3167, Asn3303, Asn3386, Asn3389, and Asn3525. 3 N-linked (GlcNAc...) asparagine glycosylation sites follow: Asn3852, Asn3865, and Asn3905. EGF-like domains lie at 3950 to 4011, 4013 to 4049, 4052 to 4090, and 4092 to 4128; these read GYEP…EQCS, RQDP…KHCE, RSDV…NQCE, and VSDS…RHCE. 16 disulfides stabilise this stretch: Cys3954/Cys3966, Cys3960/Cys3999, Cys4001/Cys4010, Cys4017/Cys4028, Cys4022/Cys4037, Cys4039/Cys4048, Cys4056/Cys4067, Cys4061/Cys4078, Cys4080/Cys4089, Cys4096/Cys4107, Cys4101/Cys4116, Cys4118/Cys4127, Cys4294/Cys4320, Cys4325/Cys4341, Cys4334/Cys4350, and Cys4352/Cys4361. One can recognise a Laminin G-like 1 domain in the interval 4129-4320; the sequence is RFSYGFQPLS…LQQKGILAGC (192 aa). Asn4306 is a glycosylation site (N-linked (GlcNAc...) asparagine). The region spanning 4321 to 4362 is the EGF-like 5 domain; it reads NRQACQPALAAERCGGFAGQCIDRWSSSLCQCGGHLQSPDCS. Residues 4402–4569 enclose the Laminin G-like 2 domain; that stretch reads DNQQMRERRA…RYHGKIESGC (168 aa). Asn4414, Asn4471, Asn4487, Asn4539, and Asn4550 each carry an N-linked (GlcNAc...) asparagine glycan. A disulfide bridge links Cys4536 with Cys4569. Residues 4584–4609 form a helical membrane-spanning segment; it reads LSIGFTLVIVFFVILVVAILGSYVIY. Topologically, residues 4610 to 5147 are cytoplasmic; the sequence is RFRGKQEKIG…NGPAAPEEYV (538 aa). Residues 4744-4771 form an essential for stability of mitochondrial electron chain complexes I and V, and promotes interaction with ND-24 region; it reads PEHYDLENASSIAPSDIDIVYHYKGYRE. Disordered stretches follow at residues 4787–4850, 4871–4921, and 4967–5041; these read AYTH…SQQP, TSSS…QTSM, and GDVD…PIPP. Residues 4826-4835 show a composition bias toward polar residues; sequence SASRTHQSTP. Low complexity-rich tracts occupy residues 4838–4850 and 4891–4918; these read RLSP…SQQP and SPVM…QAQQ. Ser4843 is subject to Phosphoserine. The span at 4972–5008 shows a compositional bias: polar residues; sequence HSSTSTDESGNDSFTCSEIEYDNNSLSGDGKYSTSKS. Residues Ser5054 and Ser5061 each carry the phosphoserine modification. The segment at 5113 to 5147 is disordered; the sequence is PDTNGPSQQQQQQTQVVSTLRMPSSNGPAAPEEYV. Positions 5119–5131 are enriched in low complexity; it reads SQQQQQQTQVVST.

In terms of assembly, interacts with Fbxl7. Ft-mito interacts with NADH dehydrogenase subunit ND-24 and with ATP synthase subunit ATPsynC. In terms of processing, phosphorylated by fj on Ser/Thr of cadherin domains. Phosphorylation by fj enhances binding to ds. Phosphorylated in the cytoplasmic domain in a dco-dependent manner which is promoted by ds. Proteolytically cleaved to yield stably associated N- and C-terminal fragments. The C-terminal fragment is processed further to release a 68 kDa mitochondrial fragment, Ft-mito.

The protein resides in the cell membrane. It is found in the apical cell membrane. It localises to the mitochondrion. In terms of biological role, involved in regulation of planar cell polarity in the compound eye where it is required for correct specification of the R3 and R4 photoreceptor cells by regulating Fz activity in the R3/R4 precursor cells. This is likely to occur through creation of an ft gradient so that the equatorial R3/R4 precursor cell has a higher level of ft function than its polar neighbor. Also required for planar cell polarity of wing hairs. Mediates heterophilic cell adhesion in vitro and is required to stabilize ds on the cell surface. Involved in regulation of eye imaginal disk size. Upstream component of the Hippo pathway where it is likely to act as a cell surface receptor involved in regulation of tissue size and is required for the localization and stability of ex. Probably acts as a cell surface receptor for ds. Its function is as follows. Regulates mitochondrial electron transport chain integrity and promotes oxidative phosphorylation. The chain is Cadherin-related tumor suppressor from Drosophila melanogaster (Fruit fly).